Consider the following 164-residue polypeptide: Decoration protein (164 aa).

Residues 1-72 (MIDYSGLRTI…AIPPAPPAPP (72 aa)) are binding to the capsid hexamer. The Ig-like domain occupies 71-164 (PPLTLSKDLT…VTVNPTVPGG (94 aa)).

In terms of assembly, interacts with the major capsid protein; each hexon binds a single copy of the decoration protein.

Its subcellular location is the virion. Decoration protein that binds asymmetrically to the center of each capsid protein hexamer after capsid expansion. Stabilizes the capsid and protects from DNA release. This Escherichia phage T5 (Enterobacteria phage T5) protein is Decoration protein.